The primary structure comprises 60 residues: Large ribosomal subunit protein uL30 (60 aa).

Belongs to the universal ribosomal protein uL30 family. In terms of assembly, part of the 50S ribosomal subunit.

The polypeptide is Large ribosomal subunit protein uL30 (Dechloromonas aromatica (strain RCB)).